The following is a 366-amino-acid chain: MAP kinase-activated protein kinase 2 (366 aa).

Residues 30–291 enclose the Protein kinase domain; that stretch reads KVTSQVLGLG…ITEFMNHPWI (262 aa). Residues 36–44 and Lys-59 contribute to the ATP site; that span reads LGLGINGKV. 105–107 provides a ligand contact to staurosporine; it reads ECL. Asp-152 acts as the Proton acceptor in catalysis. Thr-188 carries the post-translational modification Phosphothreonine; by MAPK14. Residue Ser-238 is modified to Phosphoserine; by MAPK14. Position 294 is a phosphoserine; by autocatalysis (Ser-294). The autoinhibitory helix stretch occupies residues 294-330; that stretch reads STKVPQTPLHTSRVLKEDKERWEDVKEEMTSALATMR. At Thr-300 the chain carries Phosphothreonine; by MAPK14. A Glycyl lysine isopeptide (Lys-Gly) (interchain with G-Cter in SUMO) cross-link involves residue Lys-319. Residues 322 to 331 carry the Nuclear export signal (NES) motif; the sequence is MTSALATMRV. The segment at 332-356 is p38 MAPK-binding site; it reads DYEQIKIKKIEDASNPLLLKRRKKA. 2 short sequence motifs (bipartite nuclear localization signal) span residues 337–340 and 351–355; these read KIKK and KRRKK.

It belongs to the protein kinase superfamily. CAMK Ser/Thr protein kinase family. In terms of assembly, heterodimer with p38-alpha/MAPK14; this heterodimer forms a stable complex: molecules are positioned 'face to face' so that the ATP-binding sites of both kinases are at the heterodimer interface. Interacts with PHC2. Interacts with HSF1. Post-translationally, sumoylation inhibits the protein kinase activity. In terms of processing, phosphorylated and activated by MAP kinase p38-alpha/MAPK14 at Thr-188, Ser-238 and Thr-300.

It is found in the cytoplasm. It localises to the nucleus. The enzyme catalyses L-seryl-[protein] + ATP = O-phospho-L-seryl-[protein] + ADP + H(+). It catalyses the reaction L-threonyl-[protein] + ATP = O-phospho-L-threonyl-[protein] + ADP + H(+). With respect to regulation, activated following phosphorylation by p38-alpha/MAPK14 following various stresses. Inhibited following sumoylation. Specifically inhibited by pyrrolopyridine inhibitors. Its function is as follows. Stress-activated serine/threonine-protein kinase involved in cytokine production, endocytosis, reorganization of the cytoskeleton, cell migration, cell cycle control, chromatin remodeling, DNA damage response and transcriptional regulation. Following stress, it is phosphorylated and activated by MAP kinase p38-alpha/MAPK14, leading to phosphorylation of substrates. Phosphorylates serine in the peptide sequence, Hyd-X-R-X(2)-S, where Hyd is a large hydrophobic residue. Phosphorylates ALOX5, CDC25B, CDC25C, CEP131, ELAVL1, HNRNPA0, HSP27/HSPB1, KRT18, KRT20, LIMK1, LSP1, PABPC1, PARN, PDE4A, RCSD1, RPS6KA3, TAB3 and TTP/ZFP36. Phosphorylates HSF1; leading to the interaction with HSP90 proteins and inhibiting HSF1 homotrimerization, DNA-binding and transactivation activities. Mediates phosphorylation of HSP27/HSPB1 in response to stress, leading to dissociation of HSP27/HSPB1 from large small heat-shock protein (sHsps) oligomers and impairment of their chaperone activities and ability to protect against oxidative stress effectively. Involved in inflammatory response by regulating tumor necrosis factor (TNF) and IL6 production post-transcriptionally: acts by phosphorylating AU-rich elements (AREs)-binding proteins ELAVL1, HNRNPA0, PABPC1 and TTP/ZFP36, leading to regulate the stability and translation of TNF and IL6 mRNAs. Phosphorylation of TTP/ZFP36, a major post-transcriptional regulator of TNF, promotes its binding to 14-3-3 proteins and reduces its ARE mRNA affinity leading to inhibition of dependent degradation of ARE-containing transcripts. Phosphorylates CEP131 in response to cellular stress following ultraviolet irradiation which promotes binding of CEP131 to 14-3-3 proteins and inhibits formation of novel centriolar satellites. Also involved in late G2/M checkpoint following DNA damage through a process of post-transcriptional mRNA stabilization: following DNA damage, relocalizes from nucleus to cytoplasm and phosphorylates HNRNPA0 and PARN, leading to stabilization of GADD45A mRNA. Involved in toll-like receptor signaling pathway (TLR) in dendritic cells: required for acute TLR-induced macropinocytosis by phosphorylating and activating RPS6KA3. This is MAP kinase-activated protein kinase 2 (MAPKAPK2) from Oryctolagus cuniculus (Rabbit).